The primary structure comprises 196 residues: SAGA-associated factor 11 homolog (196 aa).

The disordered stretch occupies residues 1–22 (MSAANMPTTTGAQGSGNQVPTT). The segment at 106 to 127 (CTCPNCDRLVAAARFAPHLEKC) adopts an SGF11-type zinc-finger fold. The segment at 141–196 (RLATKEGATSAHLHSSGNTGGTDDEDDVDWSSDKRRKKSNQNSRNNGSKKNNGKTF) is disordered. Serine 172 is subject to Phosphoserine. Low complexity predominate over residues 180–196 (NQNSRNNGSKKNNGKTF).

It belongs to the SGF11 family. Component of some SAGA transcription coactivator-HAT complexes, at least composed of Ada2b, not/nonstop, Pcaf/Gcn5, Sgf11 and Spt3. Within the SAGA complex, Sgf11, e(y)2, and not/nonstop form an additional subcomplex of SAGA called the DUB module (deubiquitination module). Interacts directly with not/nonstop. Interacts with the AMEX complex component xmas-2. Interacts with Cbp80; important for promoter recruitment of Sgf11 that is not associated with the DUB module.

Its subcellular location is the nucleus. The protein localises to the nucleoplasm. It localises to the cytoplasm. Component of the transcription regulatory histone acetylation (HAT) complex SAGA, a multiprotein complex that activates transcription by remodeling chromatin and mediating histone acetylation and deubiquitination. Within the SAGA complex, participates in a subcomplex that specifically deubiquitinates histone H2B. The SAGA complex is recruited to specific gene promoters by activators, where it is required for transcription. Required for nuclear receptor-mediated transactivation. Binds independently on SAGA to promoters in an RNA-dependent manner. Binds to mRNA and is essential for total mRNA export from the nucleus. Required to counteract heterochromatin silencing. Controls the development of neuronal connectivity in visual system by being required for accurate axon targeting in the optic lobe. Required for expression of ecdysone-induced genes such as br/broad. This Drosophila simulans (Fruit fly) protein is SAGA-associated factor 11 homolog.